The primary structure comprises 219 residues: dTTP/UTP pyrophosphatase (219 aa).

The active-site Proton acceptor is aspartate 79.

It belongs to the Maf family. YhdE subfamily. It depends on a divalent metal cation as a cofactor.

The protein localises to the cytoplasm. It catalyses the reaction dTTP + H2O = dTMP + diphosphate + H(+). It carries out the reaction UTP + H2O = UMP + diphosphate + H(+). Its function is as follows. Nucleoside triphosphate pyrophosphatase that hydrolyzes dTTP and UTP. May have a dual role in cell division arrest and in preventing the incorporation of modified nucleotides into cellular nucleic acids. The sequence is that of dTTP/UTP pyrophosphatase from Oleidesulfovibrio alaskensis (strain ATCC BAA-1058 / DSM 17464 / G20) (Desulfovibrio alaskensis).